We begin with the raw amino-acid sequence, 229 residues long: Urease accessory protein UreF (229 aa).

The protein belongs to the UreF family. As to quaternary structure, ureD, UreF and UreG form a complex that acts as a GTP-hydrolysis-dependent molecular chaperone, activating the urease apoprotein by helping to assemble the nickel containing metallocenter of UreC. The UreE protein probably delivers the nickel.

The protein resides in the cytoplasm. In terms of biological role, required for maturation of urease via the functional incorporation of the urease nickel metallocenter. This chain is Urease accessory protein UreF, found in Staphylococcus epidermidis (strain ATCC 35984 / DSM 28319 / BCRC 17069 / CCUG 31568 / BM 3577 / RP62A).